Reading from the N-terminus, the 185-residue chain is Ribosomal RNA small subunit methyltransferase G (185 aa).

S-adenosyl-L-methionine-binding positions include glycine 59, phenylalanine 64, 110-111 (IQ), and arginine 127.

This sequence belongs to the methyltransferase superfamily. RNA methyltransferase RsmG family.

The protein resides in the cytoplasm. The catalysed reaction is guanosine(527) in 16S rRNA + S-adenosyl-L-methionine = N(7)-methylguanosine(527) in 16S rRNA + S-adenosyl-L-homocysteine. Functionally, specifically methylates the N7 position of guanine in position 527 of 16S rRNA. This is Ribosomal RNA small subunit methyltransferase G from Helicobacter hepaticus (strain ATCC 51449 / 3B1).